The following is a 532-amino-acid chain: MRKLTKMSAMLLASGLILTGCGGNKGLEEKKENKQLTYTTVKDIGDMNPHVYGGSMSAESMIYEPLVRNTKDGIKPLLAKKWDVSEDGKTYTFHLRDDVKFHDGTTFDADAVKKNIDAVQQNKKLHSWLKISTLIDNVKVKDKYTVELNLKEAYQPALAELAMPRPYVFVSPKDFKNGTTKDGVKKFDGTGPFKLGEHKKDESADFNKNDQYWGEKSKLNKVQAKVMPAGETAFLSMKKGETNFAFTDDRGTDSLDKDSLKQLKDTGDYQVKRSQPMNTKMLVVNSGKKDNAVSDKTVRQAIGHMVNRDKIAKEILDGQEKPATQLFAKNVTDINFDMPTRKYDLKKAESLLDEAGWKKGKDSDVRQKDGKNLEMAMYYDKGSSSQKEQAEYLQAEFKKMGIKLNINGETSDKIAERRTSGDYDLMFNQTWGLLYDPQSTIAAFKAKNGYESATSGIENKDKIYNSIDDAFKIQNGKERSDAYKNILKQIDDEGIFIPISHGSMTVVAPKDLEKVSFTQSQYELPFNEMQYK.

Positions 1-20 (MRKLTKMSAMLLASGLILTG) are cleaved as a signal peptide. Cys-21 carries the N-palmitoyl cysteine lipid modification. Cys-21 carries S-diacylglycerol cysteine lipidation. 3 residues coordinate staphylopine: Arg-165, Arg-418, and Asn-448.

It belongs to the bacterial solute-binding protein 5 family. In terms of assembly, the complex is composed of two ATP-binding proteins (CntD and CntF), two transmembrane proteins (CntB and CntC) and a solute-binding protein (CntA).

The protein localises to the cell membrane. Part of the ABC transporter complex CntABCDF (Opp1) involved in the uptake of metal in complex with the metallophore staphylopine (StP). May be involved in the import of a large array of divalent metals ions such as nickel, cobalt, zinc, copper and iron. Binds the metal via the metallophore StP, and transfers the StP-metal complex to the membrane-bound permease. This is Metal-staphylopine-binding protein CntA from Staphylococcus aureus (strain Mu50 / ATCC 700699).